The chain runs to 100 residues: Large ribosomal subunit protein uL23 (100 aa).

This sequence belongs to the universal ribosomal protein uL23 family. In terms of assembly, part of the 50S ribosomal subunit. Contacts protein L29, and trigger factor when it is bound to the ribosome.

One of the early assembly proteins it binds 23S rRNA. One of the proteins that surrounds the polypeptide exit tunnel on the outside of the ribosome. Forms the main docking site for trigger factor binding to the ribosome. In Mycobacterium leprae (strain Br4923), this protein is Large ribosomal subunit protein uL23.